The following is a 488-amino-acid chain: Monodehydroascorbate reductase 4, peroxisomal (488 aa).

Residues 1 to 3 (MGR) lie on the Cytoplasmic side of the membrane. Residues 4–24 (AFVYVILGGGVAAGYAALEFT) form a helical membrane-spanning segment. FAD contacts are provided by residues 12–15 (GGVA), Glu39, Arg46, Lys51, and 145–146 (RD). Residues 25–458 (RRGVSDGELC…SASVVMIKKP (434 aa)) lie on the Peroxisomal side of the membrane. NAD(+) contacts are provided by residues 170–176 (GGYIGME), Glu194, Arg200, and Gly259. NADP(+) is bound at residue 172–176 (YIGME). NADP(+) contacts are provided by Arg200 and Gly259. Asp296 lines the FAD pocket. Residue 312–313 (EH) participates in NAD(+) binding. 312–313 (EH) serves as a coordination point for NADP(+). Position 314 (Val314) interacts with FAD. Arg318 provides a ligand contact to L-ascorbate. FAD is bound at residue Tyr344. NAD(+) is bound at residue Tyr344. NADP(+) is bound at residue Tyr344. L-ascorbate is bound at residue Arg346. A helical transmembrane segment spans residues 459–479 (LYVWHAATGVVVAASVAAFAF). Residues 480 to 488 (WYGRRRRRW) are Cytoplasmic-facing.

It belongs to the FAD-dependent oxidoreductase family. The cofactor is FAD.

It is found in the peroxisome membrane. It catalyses the reaction 2 monodehydro-L-ascorbate radical + NADH + H(+) = 2 L-ascorbate + NAD(+). In terms of biological role, catalyzes the conversion of monodehydroascorbate to ascorbate, oxidizing NADH in the process. Involved in the detoxification of H(2)O(2) that escapes the peroxisome and causes oxidative damage to oil bodies. The polypeptide is Monodehydroascorbate reductase 4, peroxisomal (Arabidopsis thaliana (Mouse-ear cress)).